A 225-amino-acid chain; its full sequence is Peptidyl-tRNA hydrolase (225 aa).

Residue Tyr-14 participates in tRNA binding. His-19 acts as the Proton acceptor in catalysis. TRNA-binding residues include Phe-64, Asn-66, and Asn-112. The interval 182 to 225 (AVALRMQPPKPEKPKPAAKAPEAQAPEAAPDERSALQKLADRFR) is disordered. Residues 198–209 (AAKAPEAQAPEA) are compositionally biased toward low complexity. The segment covering 211 to 225 (PDERSALQKLADRFR) has biased composition (basic and acidic residues).

This sequence belongs to the PTH family. As to quaternary structure, monomer.

It localises to the cytoplasm. It carries out the reaction an N-acyl-L-alpha-aminoacyl-tRNA + H2O = an N-acyl-L-amino acid + a tRNA + H(+). Functionally, hydrolyzes ribosome-free peptidyl-tRNAs (with 1 or more amino acids incorporated), which drop off the ribosome during protein synthesis, or as a result of ribosome stalling. Catalyzes the release of premature peptidyl moieties from peptidyl-tRNA molecules trapped in stalled 50S ribosomal subunits, and thus maintains levels of free tRNAs and 50S ribosomes. In Cereibacter sphaeroides (strain ATCC 17029 / ATH 2.4.9) (Rhodobacter sphaeroides), this protein is Peptidyl-tRNA hydrolase.